The sequence spans 120 residues: Flagellar protein FliT (120 aa).

The interval 1–50 (MNDFISSLNNWQALYALSNTMLSLANSGQWDELIEQEVKYVTLVEAIARN) is required for homodimerization. The fliD binding stretch occupies residues 59–97 (FQEKARELLTKVLANEAALKIKLQARMEELRVLIEQNGN).

Belongs to the FliT family. As to quaternary structure, homodimer. Interacts with FliD and FlhC.

It localises to the cytoplasm. It is found in the cytosol. Functionally, dual-function protein that regulates the transcription of class 2 flagellar operons and that also acts as an export chaperone for the filament-capping protein FliD. As a transcriptional regulator, acts as an anti-FlhDC factor; it directly binds FlhC, thus inhibiting the binding of the FlhC/FlhD complex to class 2 promoters, resulting in decreased expression of class 2 flagellar operons. As a chaperone, effects FliD transition to the membrane by preventing its premature polymerization, and by directing it to the export apparatus. In Cronobacter sakazakii (strain ATCC BAA-894) (Enterobacter sakazakii), this protein is Flagellar protein FliT.